We begin with the raw amino-acid sequence, 178 residues long: Caveolin-1 (178 aa).

Ser2 is subject to N-acetylserine. Ser2 carries the phosphoserine modification. The tract at residues 2–94 (SGGKYVDSEG…WKASFTTFTV (93 aa)) is required for homooligomerization. The Cytoplasmic portion of the chain corresponds to 2–104 (SGGKYVDSEG…TKYWFYRLLS (103 aa)). Lys5 is modified (N6-acetyllysine; alternate). Lys5 is covalently cross-linked (Glycyl lysine isopeptide (Lys-Gly) (interchain with G-Cter in ubiquitin); alternate). Tyr6 is subject to Phosphotyrosine. Position 9 is a phosphoserine (Ser9). Tyr14 is modified (phosphotyrosine; by ABL1). Tyr25 is subject to Phosphotyrosine. Residues Lys26 and Lys30 each participate in a glycyl lysine isopeptide (Lys-Gly) (interchain with G-Cter in ubiquitin) cross-link. Ser37 carries the phosphoserine modification. Glycyl lysine isopeptide (Lys-Gly) (interchain with G-Cter in ubiquitin) cross-links involve residues Lys39, Lys47, and Lys57. The interval 82-94 (DGIWKASFTTFTV) is interaction with CAVIN3. Residues 105–125 (ALFGIPMALIWGIYFAILSFL) constitute an intramembrane region (helical). The Cytoplasmic portion of the chain corresponds to 126-178 (HIWAVVPCIKSFLIEIQCISRVYSIYVHTFCDPFFEAVGKIFSNIRINMQKET). An interacts with SPRY1, SPRY2, SPRY3 and SPRY4 region spans residues 131 to 142 (VPCIKSFLIEIQ). Residues Cys133, Cys143, and Cys156 are each lipidated (S-palmitoyl cysteine). An interacts with SPRY1, SPRY2, and SPRY4 region spans residues 149–160 (SIYVHTFCDPFF). The interacts with SPRY1, SPRY2, SPRY3 and SPRY4 stretch occupies residues 167–178 (FSNIRINMQKET).

It belongs to the caveolin family. Homooligomer. Interacts with BMX, BTK, GLIPR2, NOSTRIN, SNAP25 and STX1A. Interacts with PACSIN2; this interaction induces membrane tubulation. Interacts (via the N-terminus) with DPP4; the interaction is direct. Interacts with SLC7A9. Interacts with CTNNB1, CDH1 and JUP. Interacts with TGFBR1. Interacts with CAVIN3 (via leucine-zipper domain) in a cholesterol-sensitive manner. Interacts with CAVIN1. Interacts with EHD2 in a cholesterol-dependent manner. Forms a ternary complex with UBXN6 and VCP; mediates CAV1 targeting to lysosomes for degradation. Interacts with ABCG1; this interaction regulates ABCG1-mediated cholesterol efflux. Interacts with NEU3; this interaction enhances NEU3 sialidase activity within caveola. Interacts (via C-terminus) with SPRY1, SPRY2 (via C-terminus), SPRY3, and SPRY4. Interacts with IGFBP5; this interaction allows trafficking of IGFBP5 from the plasma membrane to the nucleus. Post-translationally, phosphorylation of isoform Beta on serine residues is constitutive. Phosphorylated at Tyr-14 by ABL1 in response to oxidative stress. In terms of processing, ubiquitinated. Undergo monoubiquitination and multi- and/or polyubiquitination. Monoubiquitination of N-terminal lysines promotes integration in a ternary complex with UBXN6 and VCP which promotes oligomeric CAV1 targeting to lysosomes for degradation. Ubiquitinated by ZNRF1; leading to degradation and modulation of the TLR4-mediated immune response.

The protein resides in the golgi apparatus membrane. It is found in the cell membrane. Its subcellular location is the membrane. The protein localises to the caveola. It localises to the membrane raft. The protein resides in the golgi apparatus. It is found in the trans-Golgi network. Functionally, may act as a scaffolding protein within caveolar membranes. Forms a stable heterooligomeric complex with CAV2 that targets to lipid rafts and drives caveolae formation. Mediates the recruitment of CAVIN proteins (CAVIN1/2/3/4) to the caveolae. Interacts directly with G-protein alpha subunits and can functionally regulate their activity. Involved in the costimulatory signal essential for T-cell receptor (TCR)-mediated T-cell activation. Its binding to DPP4 induces T-cell proliferation and NF-kappa-B activation in a T-cell receptor/CD3-dependent manner. Recruits CTNNB1 to caveolar membranes and may regulate CTNNB1-mediated signaling through the Wnt pathway. Negatively regulates TGFB1-mediated activation of SMAD2/3 by mediating the internalization of TGFBR1 from membrane rafts leading to its subsequent degradation. Binds 20(S)-hydroxycholesterol (20(S)-OHC). The chain is Caveolin-1 (CAV1) from Canis lupus familiaris (Dog).